Consider the following 353-residue polypeptide: Chemerin-like receptor 2 (353 aa).

At 1-41 the chain is on the extracellular side; that stretch reads MEVSKEMLFEELDNYSYALDYYSQESDPEEKVYLGLVHWIS. Asn-14 carries N-linked (GlcNAc...) asparagine glycosylation. Residues 42-62 form a helical membrane-spanning segment; that stretch reads LFLYALAFVLGIPGNAIVIWL. Residues 63–73 are Cytoplasmic-facing; the sequence is MGFKWKKTVTT. Residues 74–94 traverse the membrane as a helical segment; that stretch reads LWFLNLAIADFIFVLFLPLYI. Over 95-112 the chain is Extracellular; sequence SYVALSFHWPFGLWLCKV. A disulfide bridge connects residues Cys-110 and Cys-187. The helical transmembrane segment at 113–133 threads the bilayer; it reads NSFIAQLNMFSSVFFLTVISL. The Cytoplasmic portion of the chain corresponds to 134–154; sequence DRYIHLLHPGLSHRHRTLKSS. A helical transmembrane segment spans residues 155–175; it reads LVVVILVWLLASLLGGPTLYF. Topologically, residues 176–210 are extracellular; the sequence is RDTMEVNNHIICYNNFQEHELTLMRHHVLTWVKFL. Residues 211 to 231 form a helical membrane-spanning segment; sequence FGYLFPLLTMSSCYLCLIFKM. Topologically, residues 232 to 247 are cytoplasmic; the sequence is KKRNILISRKHLWMIL. The chain crosses the membrane as a helical span at residues 248–268; sequence SVVIAFLVCWTPYHLFSIWEL. The Extracellular segment spans residues 269 to 286; it reads SIHHNSSFQNVLQGGIPL. The helical transmembrane segment at 287 to 307 threads the bilayer; the sequence is STGLAFLNSCLNPILYVLISK. Residues 308–353 are Cytoplasmic-facing; that stretch reads TFQARFRASVAEVLKRSLWEASCSGTVSEQLRSAETKSLSLLETAQ.

This sequence belongs to the chemokine-like receptor (CMKLR) family. As to expression, high expressed in white adipose tissue and skeletal muscle. Expressed in hippocampus and cortex.

The protein localises to the cell membrane. In terms of biological role, receptor for chemoattractant adipokine chemerin/RARRES2 suggesting a role for this receptor in the regulation of inflammation and energy homesotasis. Signals mainly via beta-arrestin pathway. Binding of RARRES2 activates weakly G proteins, calcium mobilization and MAPK1/MAPK3 (ERK1/2) phosphorylation too. Acts also as a receptor for TAFA1, mediates its effects on neuronal stem-cell proliferation and differentiation via the activation of ROCK/ERK and ROCK/STAT3 signaling pathway. This is Chemerin-like receptor 2 (Cmklr2) from Mus musculus (Mouse).